Here is a 326-residue protein sequence, read N- to C-terminus: Aspartate carbamoyltransferase catalytic subunit (326 aa).

Carbamoyl phosphate contacts are provided by Arg-58 and Thr-59. Lys-86 serves as a coordination point for L-aspartate. The carbamoyl phosphate site is built by Arg-108, His-141, and Gln-144. L-aspartate contacts are provided by Arg-181 and Arg-239. Residues Gly-280 and Pro-281 each contribute to the carbamoyl phosphate site.

Belongs to the aspartate/ornithine carbamoyltransferase superfamily. ATCase family. In terms of assembly, heterododecamer (2C3:3R2) of six catalytic PyrB chains organized as two trimers (C3), and six regulatory PyrI chains organized as three dimers (R2).

It carries out the reaction carbamoyl phosphate + L-aspartate = N-carbamoyl-L-aspartate + phosphate + H(+). It functions in the pathway pyrimidine metabolism; UMP biosynthesis via de novo pathway; (S)-dihydroorotate from bicarbonate: step 2/3. In terms of biological role, catalyzes the condensation of carbamoyl phosphate and aspartate to form carbamoyl aspartate and inorganic phosphate, the committed step in the de novo pyrimidine nucleotide biosynthesis pathway. The polypeptide is Aspartate carbamoyltransferase catalytic subunit (Synechococcus sp. (strain JA-2-3B'a(2-13)) (Cyanobacteria bacterium Yellowstone B-Prime)).